Here is a 151-residue protein sequence, read N- to C-terminus: uncharacterized protein (151 aa).

This is an uncharacterized protein from Acanthamoeba polyphaga mimivirus (APMV).